The following is a 381-amino-acid chain: Chorismate synthase (381 aa).

2 residues coordinate NADP(+): arginine 41 and arginine 47. FMN is bound by residues 127–129 (RAS), 247–248 (QA), glycine 291, 306–310 (KPIPT), and arginine 332.

The protein belongs to the chorismate synthase family. Homotetramer. It depends on FMNH2 as a cofactor.

It carries out the reaction 5-O-(1-carboxyvinyl)-3-phosphoshikimate = chorismate + phosphate. Its pathway is metabolic intermediate biosynthesis; chorismate biosynthesis; chorismate from D-erythrose 4-phosphate and phosphoenolpyruvate: step 7/7. Functionally, catalyzes the anti-1,4-elimination of the C-3 phosphate and the C-6 proR hydrogen from 5-enolpyruvylshikimate-3-phosphate (EPSP) to yield chorismate, which is the branch point compound that serves as the starting substrate for the three terminal pathways of aromatic amino acid biosynthesis. This reaction introduces a second double bond into the aromatic ring system. This is Chorismate synthase from Anaeromyxobacter dehalogenans (strain 2CP-1 / ATCC BAA-258).